The primary structure comprises 121 residues: Large ribosomal subunit protein uL14 (121 aa).

The protein belongs to the universal ribosomal protein uL14 family. In terms of assembly, part of the 50S ribosomal subunit. Forms a cluster with proteins L3 and L19. In the 70S ribosome, L14 and L19 interact and together make contacts with the 16S rRNA in bridges B5 and B8.

Functionally, binds to 23S rRNA. Forms part of two intersubunit bridges in the 70S ribosome. The sequence is that of Large ribosomal subunit protein uL14 from Synechococcus elongatus (strain ATCC 33912 / PCC 7942 / FACHB-805) (Anacystis nidulans R2).